Consider the following 110-residue polypeptide: Phosphoribosyl-ATP pyrophosphatase (110 aa).

The protein belongs to the PRA-PH family.

The protein localises to the cytoplasm. It carries out the reaction 1-(5-phospho-beta-D-ribosyl)-ATP + H2O = 1-(5-phospho-beta-D-ribosyl)-5'-AMP + diphosphate + H(+). It functions in the pathway amino-acid biosynthesis; L-histidine biosynthesis; L-histidine from 5-phospho-alpha-D-ribose 1-diphosphate: step 2/9. This chain is Phosphoribosyl-ATP pyrophosphatase, found in Clostridium novyi (strain NT).